The chain runs to 808 residues: Potassium transporter 5 (808 aa).

The Cytoplasmic segment spans residues 1-65 (MAEEVGETRG…NQVNWKKTLS (65 aa)). The helical transmembrane segment at 66-86 (LTFQSIGVVYGDIGTSPLYVY) threads the bilayer. Residues 87–102 (ESTFPDKIGSKEDILG) lie on the Extracellular side of the membrane. The chain crosses the membrane as a helical span at residues 103–123 (VLSLIIYTLVLLPMLKYVFIV). The Cytoplasmic segment spans residues 124–189 (LRANDNGDGG…EKMENSKNIK (66 aa)). The chain crosses the membrane as a helical span at residues 190-210 (ILLFLVTILGTSMVIGDGVLT). At 211 to 221 (PCISVLSAVSG) the chain is on the extracellular side. The helical transmembrane segment at 222-242 (IGSLGQDAVVGISIAILIVLF) threads the bilayer. The Cytoplasmic portion of the chain corresponds to 243–251 (CAQRLGTDK). A helical transmembrane segment spans residues 252-272 (VGFSFAPIILLWFSFIGGIGL). Topologically, residues 273–302 (YNLFKYDVSVLRAFNPKYMFDYFKRNGKQG) are extracellular. The helical transmembrane segment at 303–323 (WISLGGVVLAVTGTEAMFADL) threads the bilayer. Residues 324-327 (GHFN) lie on the Cytoplasmic side of the membrane. A helical membrane pass occupies residues 328-348 (VQAIQISFSGIVFPALLCAYA). At 349 to 379 (GQAAYLTKFPDDVSKTFYKSIPDPLYWPTFV) the chain is on the extracellular side. Residues 380–400 (VAVAAAIIASQAMISGAFAII) traverse the membrane as a helical segment. Residues 401–424 (SQSLSLGCFPRVKVIHTSAKYEGQ) lie on the Cytoplasmic side of the membrane. Residues 425-445 (VYIPEVNYILMIACIMVCLGF) traverse the membrane as a helical segment. Residues 446–456 (KTTEKIGNAYG) lie on the Extracellular side of the membrane. A helical membrane pass occupies residues 457–477 (IAVVAVMVITTCMVTIIMLVV). The Cytoplasmic segment spans residues 478–482 (WRTKM). The helical transmembrane segment at 483–503 (IWIAFFFFGFICIEAVYLSSV) threads the bilayer. At 504–510 (LYKFKDG) the chain is on the extracellular side. Residues 511–531 (GFLPLAFSFFLMIIMGIWHYI) traverse the membrane as a helical segment. Residues 532–808 (HKERYMYELK…LLRVGMTYEI (277 aa)) lie on the Cytoplasmic side of the membrane. The disordered stretch occupies residues 699 to 722 (LQQPNPSRVSSGSIHSNSGIKSTK).

Belongs to the HAK/KUP transporter (TC 2.A.72.3) family. Expressed in the roots.

The protein localises to the cell membrane. The catalysed reaction is K(+)(in) = K(+)(out). Functionally, high-affinity potassium transporter that functions under low potassium conditions. Involved in the positive regulation of salt tolerance under salt stress. The chain is Potassium transporter 5 from Manihot esculenta (Cassava).